Reading from the N-terminus, the 248-residue chain is Methyl-coenzyme M reductase subunit gamma (248 aa).

Position 121 (Arg121) interacts with coenzyme M.

The protein belongs to the methyl-coenzyme M reductase gamma subunit family. In terms of assembly, MCR is a hexamer of two alpha, two beta, and two gamma chains, forming a dimer of heterotrimers. Requires coenzyme F430 as cofactor.

Its subcellular location is the cytoplasm. The enzyme catalyses coenzyme B + methyl-coenzyme M = methane + coenzyme M-coenzyme B heterodisulfide. It functions in the pathway one-carbon metabolism; methyl-coenzyme M reduction; methane from methyl-coenzyme M: step 1/1. Functionally, component of the methyl-coenzyme M reductase (MCR) I that catalyzes the reductive cleavage of methyl-coenzyme M (CoM-S-CH3 or 2-(methylthio)ethanesulfonate) using coenzyme B (CoB or 7-mercaptoheptanoylthreonine phosphate) as reductant which results in the production of methane and the mixed heterodisulfide of CoB and CoM (CoM-S-S-CoB). This is the final step in methanogenesis. In Methanosarcina barkeri (strain Fusaro / DSM 804), this protein is Methyl-coenzyme M reductase subunit gamma (mcrG).